The following is a 1002-amino-acid chain: Inversin-B (1002 aa).

ANK repeat units follow at residues 9-39 (SLAS…VIDQ), 43-72 (LGRT…KVNR), 76-105 (SGRT…DCTH), 109-140 (CDIT…QVDA), 144-173 (RKQT…NIGI), 177-209 (EGKI…TESL), 216-246 (EGRT…NVAP), 250-279 (LFRT…SPNI), 284-313 (QGAT…VRDE), 317-346 (EGRT…KLEV), 352-381 (YGGT…QADA), 385-414 (MKHT…KVHL), 418-447 (DGRS…NPDA), 451-480 (EGRT…DPNI), 484-513 (NGRT…FPNQ), and 519-549 (ERYT…SIAA). The short motif at 486 to 494 (RTALHWSCN) is the D-box 1 element. Positions 551–580 (QDIAAFKIQAVYKGHKVRRAFQERKNLLMK) constitute an IQ 1 domain. Composition is skewed to basic and acidic residues over residues 586 to 599 (KGAA…ENRQ), 609 to 621 (KQKD…RQNK), and 643 to 656 (AEDR…ENLE). 2 disordered regions span residues 586 to 804 (KGAA…KGRR) and 862 to 886 (SAKT…SSSA). Composition is skewed to polar residues over residues 670–680 (QRITAQIQSSP) and 687–706 (NSIQ…SSPL). Composition is skewed to basic and acidic residues over residues 733 to 763 (HQME…EERK) and 770 to 796 (QSSD…EGKK). A D-box 2 motif is present at residues 959 to 967 (RKQLFQRKN). One can recognise an IQ 2 domain in the interval 966-995 (KNHAATVIQKAWRTYWVRKSSCKTRHSRSQ).

Interacts with apc2. Binds calmodulin.

It is found in the cytoplasm. The protein resides in the cytoskeleton. Required for normal renal development and establishment of left-right axis. Probably acts as a molecular switch between different Wnt signaling pathways. Inhibits the canonical Wnt pathway by targeting cytoplasmic disheveled for degradation by the ubiquitin-proteasome. This suggests that it is required in renal development to oppose the repression of terminal differentiation of tubular epithelial cells by Wnt signaling. Plays a central role in convergent extension movements in gastrulating embryos, a processus regulated by Wnt signaling. This Xenopus laevis (African clawed frog) protein is Inversin-B (invs-b).